The primary structure comprises 299 residues: uncharacterized protein (299 aa).

Residues 1–20 (MTTKHELVINTNEPSAPNAD) are disordered. The helical transmembrane segment at 172-192 (SFFIPPMVVISTPICLGLTVF) threads the bilayer.

The protein belongs to the IIV-6 259R family.

The protein resides in the membrane. This is an uncharacterized protein from Acheta domesticus (House cricket).